Here is a 179-residue protein sequence, read N- to C-terminus: Large ribosomal subunit protein uL5 (179 aa).

Belongs to the universal ribosomal protein uL5 family. Part of the 50S ribosomal subunit; part of the 5S rRNA/L5/L18/L25 subcomplex. Contacts the 5S rRNA and the P site tRNA. Forms a bridge to the 30S subunit in the 70S ribosome.

This is one of the proteins that bind and probably mediate the attachment of the 5S RNA into the large ribosomal subunit, where it forms part of the central protuberance. In the 70S ribosome it contacts protein S13 of the 30S subunit (bridge B1b), connecting the 2 subunits; this bridge is implicated in subunit movement. Contacts the P site tRNA; the 5S rRNA and some of its associated proteins might help stabilize positioning of ribosome-bound tRNAs. This is Large ribosomal subunit protein uL5 from Herpetosiphon aurantiacus (strain ATCC 23779 / DSM 785 / 114-95).